We begin with the raw amino-acid sequence, 214 residues long: Small ribosomal subunit protein eS1 (214 aa).

This sequence belongs to the eukaryotic ribosomal protein eS1 family.

In Aeropyrum pernix (strain ATCC 700893 / DSM 11879 / JCM 9820 / NBRC 100138 / K1), this protein is Small ribosomal subunit protein eS1.